Reading from the N-terminus, the 490-residue chain is GTPase Der (490 aa).

2 consecutive EngA-type G domains span residues 3 to 166 and 203 to 376; these read PVVA…MEDL and IKLA…DSST. Residues 9–16, 56–60, 118–121, 209–216, 256–260, and 321–324 contribute to the GTP site; these read GRPNVGKS, DTGGI, NKTD, DTAGV, and NKWD. One can recognise a KH-like domain in the interval 377–461; that stretch reads RRVGTSMLTR…PIRIQFKEGE (85 aa).

This sequence belongs to the TRAFAC class TrmE-Era-EngA-EngB-Septin-like GTPase superfamily. EngA (Der) GTPase family. Associates with the 50S ribosomal subunit.

GTPase that plays an essential role in the late steps of ribosome biogenesis. This chain is GTPase Der, found in Escherichia coli O157:H7.